We begin with the raw amino-acid sequence, 151 residues long: Deoxyuridine 5'-triphosphate nucleotidohydrolase (151 aa).

Substrate is bound by residues 70 to 72, Asn83, and 87 to 89; these read RSG and LID.

Belongs to the dUTPase family. It depends on Mg(2+) as a cofactor.

The catalysed reaction is dUTP + H2O = dUMP + diphosphate + H(+). It functions in the pathway pyrimidine metabolism; dUMP biosynthesis; dUMP from dCTP (dUTP route): step 2/2. Its function is as follows. This enzyme is involved in nucleotide metabolism: it produces dUMP, the immediate precursor of thymidine nucleotides and it decreases the intracellular concentration of dUTP so that uracil cannot be incorporated into DNA. The chain is Deoxyuridine 5'-triphosphate nucleotidohydrolase from Methylococcus capsulatus (strain ATCC 33009 / NCIMB 11132 / Bath).